Here is a 93-residue protein sequence, read N- to C-terminus: RNA-binding protein Hfq (93 aa).

One can recognise a Sm domain in the interval 9-68 (DPYLNALRRERIPVSIYLVNGIKLQGQIESFDQFVILLKNTVSQMVYKHAISTVVPARAI). A compositionally biased stretch (low complexity) spans 70–81 (HNNNSNHAHQAA). The tract at residues 70-93 (HNNNSNHAHQAAPVQSAEVVEKVE) is disordered.

Belongs to the Hfq family. In terms of assembly, homohexamer.

Its function is as follows. RNA chaperone that binds small regulatory RNA (sRNAs) and mRNAs to facilitate mRNA translational regulation in response to envelope stress, environmental stress and changes in metabolite concentrations. Also binds with high specificity to tRNAs. This Glaesserella parasuis serovar 5 (strain SH0165) (Haemophilus parasuis) protein is RNA-binding protein Hfq.